A 291-amino-acid polypeptide reads, in one-letter code: MTEQVNSDTTSDTTTTITTVYISNLPFTASERDLHAFLNNYGASSVLIPTQTVRRFSKRHNSNPRKPLGIAFAQFANNTLALKAIQDLNGTVFQNQKLFLKLHVPYEADSTPDTDVKKPKEKNKVKKTPETAADTVYCHDLPDDITDSEIRELFQLYSPQEIWIYRSKVYRRKCIPFAPHQITAALVTLQSETPIGDICDSVAKTATLRGKSIIVKPAYVSKIQEIKQLVKDNLTNARDPPPAALAEPAPAPAPAPVEPAEQVQEGQDNAETNDVPPPPASSSDRPTVAAA.

The RRM domain maps to 18–105; that stretch reads TTVYISNLPF…QKLFLKLHVP (88 aa). The tract at residues 235 to 291 is disordered; that stretch reads TNARDPPPAALAEPAPAPAPAPVEPAEQVQEGQDNAETNDVPPPPASSSDRPTVAAA. Over residues 239 to 257 the composition is skewed to pro residues; sequence DPPPAALAEPAPAPAPAPV.

The protein belongs to the RRT5 family.

In terms of biological role, may be involved in the modulation of rDNA transcription. The polypeptide is Regulator of rDNA transcription protein 5 (RRT5) (Saccharomyces cerevisiae (strain Lalvin EC1118 / Prise de mousse) (Baker's yeast)).